The sequence spans 476 residues: NADH-quinone oxidoreductase subunit N (476 aa).

The next 14 membrane-spanning stretches (helical) occupy residues 5 to 25, 38 to 58, 70 to 90, 97 to 117, 122 to 142, 157 to 177, 196 to 218, 231 to 253, 264 to 284, 292 to 312, 318 to 338, 364 to 384, 401 to 421, and 445 to 465; these read LALI…LMLG, LSAL…FGVE, AFGG…ILVA, GMRA…GIMA, LMTL…LASF, FVLG…LYGF, IGLI…AVPF, TPVT…ARIV, WQQI…VGAI, LLAY…AAGT, GVLT…LVVL, LAAA…LFGF, PLAV…IAII, and IVAA…PALA.

Belongs to the complex I subunit 2 family. NDH-1 is composed of 14 different subunits. Subunits NuoA, H, J, K, L, M, N constitute the membrane sector of the complex.

Its subcellular location is the cell inner membrane. The enzyme catalyses a quinone + NADH + 5 H(+)(in) = a quinol + NAD(+) + 4 H(+)(out). Functionally, NDH-1 shuttles electrons from NADH, via FMN and iron-sulfur (Fe-S) centers, to quinones in the respiratory chain. The immediate electron acceptor for the enzyme in this species is believed to be ubiquinone. Couples the redox reaction to proton translocation (for every two electrons transferred, four hydrogen ions are translocated across the cytoplasmic membrane), and thus conserves the redox energy in a proton gradient. This chain is NADH-quinone oxidoreductase subunit N, found in Sphingopyxis alaskensis (strain DSM 13593 / LMG 18877 / RB2256) (Sphingomonas alaskensis).